The following is a 132-amino-acid chain: Small ribosomal subunit protein uS8c (132 aa).

The protein belongs to the universal ribosomal protein uS8 family. In terms of assembly, part of the 30S ribosomal subunit.

The protein resides in the plastid. It is found in the chloroplast. Functionally, one of the primary rRNA binding proteins, it binds directly to 16S rRNA central domain where it helps coordinate assembly of the platform of the 30S subunit. The protein is Small ribosomal subunit protein uS8c (rps8) of Phaeodactylum tricornutum (strain CCAP 1055/1).